We begin with the raw amino-acid sequence, 539 residues long: Dopamine receptor 2 (539 aa).

Residues 1–113 (MVDDNGSSPE…LPNDRVGLLA (113 aa)) lie on the Extracellular side of the membrane. N5, N31, N47, and N68 each carry an N-linked (GlcNAc...) asparagine glycan. Residues 114–134 (FLFLFSFATVFGNSLVILAVI) form a helical membrane-spanning segment. The Cytoplasmic portion of the chain corresponds to 135–145 (RERYLHTATNY). Residues 146–166 (FITSLAVADCLVGLVVMPFSA) form a helical membrane-spanning segment. Topologically, residues 167–189 (LYEVLENTWFFGTDWCDIWRSLD) are extracellular. The cysteines at positions 182 and 261 are disulfide-linked. Residues 190–206 (VLFSTASILNLCVISLD) form a helical membrane-spanning segment. The Cytoplasmic portion of the chain corresponds to 207-227 (RYWAITDPFSYPMRMTVKRAA). A helical transmembrane segment spans residues 228 to 248 (GLIAAVWICSSAISFPAIVWW). The Extracellular segment spans residues 249–266 (RAARDGEMPAYKCTFTEH). A helical transmembrane segment spans residues 267–287 (LGYLVFSSTISFYLPLLVMVF). Residues 288-420 (TYCRIYRAAV…FAKEKKAAKT (133 aa)) are Cytoplasmic-facing. A disordered region spans residues 326–387 (GGTTRDQQNQ…EPDDEPLSAL (62 aa)). Residues 337-352 (SGGGGGGGGGGGGGGS) are compositionally biased toward gly residues. Residues 356 to 367 (SHSHSHHHHHNH) are compositionally biased toward basic residues. A helical transmembrane segment spans residues 421–441 (LGIVMGVFIICWLPFFVVNLL). The Extracellular segment spans residues 442–453 (SGFCIECIEHEE). Residues 454–474 (IVSAIVTWLGWINSCMNPVIY) form a helical membrane-spanning segment. Over 475–539 (ACWSRDFRRA…RHNSCEQTYI (65 aa)) the chain is Cytoplasmic. 2 S-palmitoyl cysteine lipidation sites follow: C492 and C493.

The protein belongs to the G-protein coupled receptor 1 family. Expressed in both central and peripheral nervous systems.

The protein localises to the cell membrane. In terms of biological role, receptor for dopamine. The activity of this receptor is mediated by G proteins which activate adenylyl cyclase. Also capable of generating a calcium signal. In terms of antagonist responses, would be classed with the D1-like dopamine receptor group. This receptor is an attractive candidate for initiating biochemical cascades underlying olfactory learning. The sequence is that of Dopamine receptor 2 (Dop1R2) from Drosophila melanogaster (Fruit fly).